The following is a 300-amino-acid chain: Phospholipase A1 (300 aa).

Residues Cys4 and Cys87 are joined by a disulfide bond. Ser137 functions as the Nucleophile in the catalytic mechanism. Asp165 acts as the Charge relay system in catalysis. Disulfide bonds link Cys176–Cys181 and Cys219–Cys227. His229 functions as the Charge relay system in the catalytic mechanism. 3 disulfide bridges follow: Cys244/Cys268, Cys245/Cys293, and Cys261/Cys266.

Belongs to the AB hydrolase superfamily. Lipase family. Expressed by the venom gland.

It is found in the secreted. It catalyses the reaction a 1,2-diacyl-sn-glycero-3-phosphocholine + H2O = a 2-acyl-sn-glycero-3-phosphocholine + a fatty acid + H(+). In terms of biological role, catalyzes the hydrolysis of phosphatidylcholine with phospholipase A1 activity. May act as an allergen and induce hemolytic activity. The sequence is that of Phospholipase A1 from Vespula maculifrons (Eastern yellow jacket).